Here is a 103-residue protein sequence, read N- to C-terminus: Nucleoid-associated protein Anae109_3761 (103 aa).

The protein belongs to the YbaB/EbfC family. In terms of assembly, homodimer.

The protein localises to the cytoplasm. It is found in the nucleoid. Its function is as follows. Binds to DNA and alters its conformation. May be involved in regulation of gene expression, nucleoid organization and DNA protection. This chain is Nucleoid-associated protein Anae109_3761, found in Anaeromyxobacter sp. (strain Fw109-5).